Reading from the N-terminus, the 64-residue chain is Photosystem II reaction center protein J (64 aa).

A helical membrane pass occupies residues 35–55 (LWLVATAGGIAVIFVLGIFFY).

The protein belongs to the PsbJ family. PSII is composed of 1 copy each of membrane proteins PsbA, PsbB, PsbC, PsbD, PsbE, PsbF, PsbH, PsbI, PsbJ, PsbK, PsbL, PsbM, PsbT, PsbX, PsbY, Psb30/Ycf12, peripheral proteins PsbO, CyanoQ (PsbQ), PsbU, PsbV and a large number of cofactors. It forms dimeric complexes.

The protein resides in the cellular thylakoid membrane. In terms of biological role, one of the components of the core complex of photosystem II (PSII). PSII is a light-driven water:plastoquinone oxidoreductase that uses light energy to abstract electrons from H(2)O, generating O(2) and a proton gradient subsequently used for ATP formation. It consists of a core antenna complex that captures photons, and an electron transfer chain that converts photonic excitation into a charge separation. The chain is Photosystem II reaction center protein J from Prochlorococcus marinus (strain MIT 9515).